The primary structure comprises 472 residues: Fumarate hydratase class II (472 aa).

Residues 1 to 20 form a disordered region; that stretch reads MSPHENPSVETRTESDTFGP. Substrate contacts are provided by residues 105-107, 136-139, 146-148, and Thr194; these read SGT, HPND, and SSN. The interval 127–149 is disordered; the sequence is GKRGGKSPVHPNDHCNRGQSSND. The Proton donor/acceptor role is filled by His195. Residue Ser325 is part of the active site. Substrate-binding positions include Ser326 and 331–333; that span reads KVN.

It belongs to the class-II fumarase/aspartase family. Fumarase subfamily. Homotetramer.

It localises to the cytoplasm. The enzyme catalyses (S)-malate = fumarate + H2O. It functions in the pathway carbohydrate metabolism; tricarboxylic acid cycle; (S)-malate from fumarate: step 1/1. In terms of biological role, involved in the TCA cycle. Catalyzes the stereospecific interconversion of fumarate to L-malate. This chain is Fumarate hydratase class II, found in Methylorubrum extorquens (strain ATCC 14718 / DSM 1338 / JCM 2805 / NCIMB 9133 / AM1) (Methylobacterium extorquens).